Here is a 49-residue protein sequence, read N- to C-terminus: U3-plectoxin-Pt1a (49 aa).

5 cysteine pairs are disulfide-bonded: C2–C16, C9–C30, C15–C41, C32–C39, and C45–C49.

As to expression, expressed by the venom gland.

It is found in the secreted. In terms of biological role, potent toxin that may paralyze and/or kill insect pests such as H.virescens (lepidoptera), S.exigua (beet armyworm) and M.sexta (tobacco hornworm). This Plectreurys tristis (Spider) protein is U3-plectoxin-Pt1a.